Consider the following 213-residue polypeptide: ATP phosphoribosyltransferase (213 aa).

It belongs to the ATP phosphoribosyltransferase family. Short subfamily. As to quaternary structure, heteromultimer composed of HisG and HisZ subunits.

Its subcellular location is the cytoplasm. The catalysed reaction is 1-(5-phospho-beta-D-ribosyl)-ATP + diphosphate = 5-phospho-alpha-D-ribose 1-diphosphate + ATP. The protein operates within amino-acid biosynthesis; L-histidine biosynthesis; L-histidine from 5-phospho-alpha-D-ribose 1-diphosphate: step 1/9. Its function is as follows. Catalyzes the condensation of ATP and 5-phosphoribose 1-diphosphate to form N'-(5'-phosphoribosyl)-ATP (PR-ATP). Has a crucial role in the pathway because the rate of histidine biosynthesis seems to be controlled primarily by regulation of HisG enzymatic activity. The polypeptide is ATP phosphoribosyltransferase (Bacillus licheniformis (strain ATCC 14580 / DSM 13 / JCM 2505 / CCUG 7422 / NBRC 12200 / NCIMB 9375 / NCTC 10341 / NRRL NRS-1264 / Gibson 46)).